We begin with the raw amino-acid sequence, 355 residues long: Probable nitronate monooxygenase (355 aa).

FMN contacts are provided by residues Asn71, Gln175, Gly180, Gly218, and 237-240; that span reads QMGT.

The protein belongs to the nitronate monooxygenase family. NMO class I subfamily. The cofactor is FMN.

It carries out the reaction 3 propionate 3-nitronate + 3 O2 + H2O = 3 3-oxopropanoate + 2 nitrate + nitrite + H2O2 + 3 H(+). Functionally, nitronate monooxygenase that uses molecular oxygen to catalyze the oxidative denitrification of alkyl nitronates. Acts on propionate 3-nitronate (P3N), the presumed physiological substrate. Probably functions in the detoxification of P3N, a metabolic poison produced by plants and fungi as a defense mechanism. This chain is Probable nitronate monooxygenase, found in Staphylococcus aureus (strain MSSA476).